A 406-amino-acid polypeptide reads, in one-letter code: Eukaryotic initiation factor 4A-I (406 aa).

Residues 1–21 (MSASQDSRSRDNGPDGMEPEG) form a disordered region. N-acetylserine is present on Ser2. A Phosphoserine modification is found at Ser4. The Q motif signature appears at 32–60 (DSFDDMNLSESLLRGIYAYGFEKPSAIQQ). The 172-residue stretch at 63–234 (ILPCIKGYDV…KKFMRDPIRI (172 aa)) folds into the Helicase ATP-binding domain. Residue 76–83 (AQSGTGKT) participates in ATP binding. Lys118 bears the N6-acetyllysine mark. A Glycyl lysine isopeptide (Lys-Gly) (interchain with G-Cter in SUMO2) cross-link involves residue Lys146. Thr158 carries the phosphothreonine modification. Lys174 is subject to N6-acetyllysine. Positions 182-185 (DEAD) match the DEAD box motif. Lys193 bears the N6-acetyllysine mark. Residue Lys225 forms a Glycyl lysine isopeptide (Lys-Gly) (interchain with G-Cter in SUMO2) linkage. Lys238 carries the post-translational modification N6-acetyllysine; alternate. Residue Lys238 forms a Glycyl lysine isopeptide (Lys-Gly) (interchain with G-Cter in SUMO2); alternate linkage. Residues 245-406 (GIRQFYINVE…EMPLNVADLI (162 aa)) form the Helicase C-terminal domain. Residues Lys309, Lys369, and Lys381 each participate in a glycyl lysine isopeptide (Lys-Gly) (interchain with G-Cter in SUMO2) cross-link.

It belongs to the DEAD box helicase family. eIF4A subfamily. In terms of assembly, eIF4F is a multi-subunit complex, the composition of which varies with external and internal environmental conditions. It is composed of at least EIF4A, EIF4E and EIF4G1/EIF4G3. Interacts with PAIP1, EIF4E and UPF2. Found in a complex with XPO7, EIF4A1, ARHGAP1, VPS26A, VPS29, VPS35 and SFN. May interact with NOM1. Interacts with PDCD4; this interferes with the interaction between EIF4A and EIF4G. Interacts with RBM4. Interacts with DDX3X in an RNA-independent manner. Interacts with PKP1 (via N-terminus); the interaction promotes EIF4A1 recruitment to the cap-dependent translation complex and EIF4A1 ATPase activity.

It localises to the cytoplasm. It is found in the perinuclear region. Its subcellular location is the cell membrane. The protein localises to the stress granule. It catalyses the reaction ATP + H2O = ADP + phosphate + H(+). ATP-dependent RNA helicase which is a subunit of the eIF4F complex involved in cap recognition and is required for mRNA binding to ribosome. In the current model of translation initiation, eIF4A unwinds RNA secondary structures in the 5'-UTR of mRNAs which is necessary to allow efficient binding of the small ribosomal subunit, and subsequent scanning for the initiator codon. As a result, promotes cell proliferation and growth. The polypeptide is Eukaryotic initiation factor 4A-I (EIF4A1) (Bos taurus (Bovine)).